The primary structure comprises 208 residues: Urease accessory protein UreE (208 aa).

The disordered stretch occupies residues 145–165 (EGGAYSAGGHGHTHAPAATPV).

The protein belongs to the UreE family.

The protein localises to the cytoplasm. Functionally, involved in urease metallocenter assembly. Binds nickel. Probably functions as a nickel donor during metallocenter assembly. This Polaromonas naphthalenivorans (strain CJ2) protein is Urease accessory protein UreE.